The following is a 416-amino-acid chain: Serine carboxypeptidase S10 family member 1 (416 aa).

Positions 1-20 (MMKLLFIIISIIFVINVSNS) are cleaved as a signal peptide. N-linked (GlcNAc...) asparagine glycans are attached at residues Asn-33 and Asn-84. Ser-156 is an active-site residue. Residues Asn-235, Asn-273, and Asn-295 are each glycosylated (N-linked (GlcNAc...) asparagine). Residue Asp-338 is part of the active site. Asn-385 carries N-linked (GlcNAc...) asparagine glycosylation. The active site involves His-396.

The protein belongs to the peptidase S10 family.

Its subcellular location is the secreted. Its function is as follows. Probable carboxypeptidase. The polypeptide is Serine carboxypeptidase S10 family member 1 (Dictyostelium discoideum (Social amoeba)).